The primary structure comprises 215 residues: 3-isopropylmalate dehydratase small subunit (215 aa).

This sequence belongs to the LeuD family. LeuD type 1 subfamily. In terms of assembly, heterodimer of LeuC and LeuD.

The enzyme catalyses (2R,3S)-3-isopropylmalate = (2S)-2-isopropylmalate. It participates in amino-acid biosynthesis; L-leucine biosynthesis; L-leucine from 3-methyl-2-oxobutanoate: step 2/4. In terms of biological role, catalyzes the isomerization between 2-isopropylmalate and 3-isopropylmalate, via the formation of 2-isopropylmaleate. The sequence is that of 3-isopropylmalate dehydratase small subunit from Leptothrix cholodnii (strain ATCC 51168 / LMG 8142 / SP-6) (Leptothrix discophora (strain SP-6)).